Consider the following 258-residue polypeptide: Development-specific 25 kDa protein (258 aa).

Residue 10–34 coordinates NAD(+); sequence VYVGGFSGFGYQVCQMMMKKPMKHL. Residue Ser-138 coordinates substrate. The Proton acceptor role is filled by Tyr-151.

Belongs to the short-chain dehydrogenases/reductases (SDR) family.

The chain is Development-specific 25 kDa protein from Sarcophaga peregrina (Flesh fly).